Reading from the N-terminus, the 141-residue chain is VLSADDKANVKAAWGKLGGHGAEYGAEALGRMFCSFPTTKTYFPHFDVSHGSAQVKGHGAKVADALTTAAGHLDDLPGALSALSDLHAHKLRVDPVNFKLLSHCLLVTLAAHHPAEFTPAVHASLDKFLASVSTVLTSKYR.

The Globin domain occupies 1–141 (VLSADDKANV…VSTVLTSKYR (141 aa)). Residue Ser-3 is modified to Phosphoserine. An N6-succinyllysine mark is found at Lys-7 and Lys-11. An N6-acetyllysine; alternate modification is found at Lys-16. Lys-16 carries the N6-succinyllysine; alternate modification. Tyr-24 is subject to Phosphotyrosine. A Phosphoserine modification is found at Ser-35. Lys-40 is modified (N6-succinyllysine). Residue Ser-49 is modified to Phosphoserine. Residue His-58 participates in O2 binding. Residue His-87 participates in heme b binding. Ser-102 is modified (phosphoserine). Thr-108 is modified (phosphothreonine). 2 positions are modified to phosphoserine: Ser-124 and Ser-131. 2 positions are modified to phosphothreonine: Thr-134 and Thr-137. Phosphoserine is present on Ser-138.

The protein belongs to the globin family. In terms of assembly, heterotetramer of two alpha chains and two beta chains. Red blood cells.

Functionally, involved in oxygen transport from the lung to the various peripheral tissues. In Peromyscus californicus (California mouse), this protein is Hemoglobin subunit alpha.